The chain runs to 1627 residues: Formin-like protein 5 (1627 aa).

In terms of domain architecture, Phosphatase tensin-type spans 5 to 194; the sequence is RKFFLKKTPD…HYITRQGSGP (190 aa). The active-site Phosphocysteine intermediate is the Cys127. The 138-residue stretch at 200–337 folds into the C2 tensin-type domain; the sequence is SRPLILDSIV…FRAEVVFSDP (138 aa). Disordered stretches follow at residues 370–413, 680–787, 801–1181, 1241–1261, and 1571–1627; these read EAEE…LEKH, TKRE…YDSS, KFNV…RGVV, AAVPKPNDSSKSDSRRKSLGS, and KQAE…KDVG. Basic and acidic residues-rich tracts occupy residues 402-413, 681-691, 700-717, and 726-742; these read VSREDSGSLEKH, KREESGGRRDV, IEARAKSPRISSDRRQIP, and MPVDHAPEAVLLEEKLG. Composition is skewed to pro residues over residues 824–835, 852–870, 877–886, 897–908, 931–965, and 974–1168; these read APPPPPPPPPPY, QPPPPPPPPPLPPPPPPPA, IPPPPPPPPL, VPPPPPPPPPPR, ISPPPPPPPPPLKPSSGAPCPPPPPPPPPPPPPSA, and APPP…PPGG. The 401-residue stretch at 1188–1588 folds into the FH2 domain; it reads FGAAAARKST…RAEKEAEAEK (401 aa). Composition is skewed to basic and acidic residues over residues 1248 to 1261 and 1571 to 1590; these read DSSKSDSRRKSLGS and KQAELDKKRAEKEAEAEKSK. Over residues 1600-1611 the composition is skewed to polar residues; it reads KPSNPSRQVKQT. The segment covering 1612-1627 has biased composition (basic and acidic residues); it reads PDTKTRAASRRGKDVG.

Belongs to the formin-like family. Class-II subfamily.

This chain is Formin-like protein 5 (FH5), found in Oryza sativa subsp. japonica (Rice).